The primary structure comprises 72 residues: Translation initiation factor IF-1 (72 aa).

Residues 1–72 enclose the S1-like domain; that stretch reads MAKDDVIEVD…DKGRITFRYK (72 aa).

Belongs to the IF-1 family. As to quaternary structure, component of the 30S ribosomal translation pre-initiation complex which assembles on the 30S ribosome in the order IF-2 and IF-3, IF-1 and N-formylmethionyl-tRNA(fMet); mRNA recruitment can occur at any time during PIC assembly.

Its subcellular location is the cytoplasm. One of the essential components for the initiation of protein synthesis. Stabilizes the binding of IF-2 and IF-3 on the 30S subunit to which N-formylmethionyl-tRNA(fMet) subsequently binds. Helps modulate mRNA selection, yielding the 30S pre-initiation complex (PIC). Upon addition of the 50S ribosomal subunit IF-1, IF-2 and IF-3 are released leaving the mature 70S translation initiation complex. The chain is Translation initiation factor IF-1 from Nitratiruptor sp. (strain SB155-2).